The following is a 432-amino-acid chain: Transcriptional adapter 3 (432 aa).

K21 is covalently cross-linked (Glycyl lysine isopeptide (Lys-Gly) (interchain with G-Cter in SUMO2)). A coiled-coil region spans residues 40-69 (IEELDTLQLELETLLSSASRRLRVLEAETQ). The disordered stretch occupies residues 87-127 (GRDHELGAPPKHGKPKKQKLEGKAGHGPGPGPGRPKSKNLQ). A Glycyl lysine isopeptide (Lys-Gly) (interchain with G-Cter in SUMO2) cross-link involves residue K129. Composition is skewed to basic and acidic residues over residues 211 to 223 (DGAR…DKKK) and 232 to 251 (LDTK…HEQP). Disordered regions lie at residues 211–257 (DGAR…GCPF) and 271–319 (ENII…SRIK). 2 positions are modified to phosphoserine: S280 and S298. Residues 295-305 (ASTSPRNQNKP) are compositionally biased toward polar residues. Positions 367 to 407 (LLRLAKEEVSRQELRQRVRMADNEVMDAFRKIMAARQKKRT) form a coiled coil. At K418 the chain carries N6-acetyllysine.

Belongs to the NGG1 family. The PCAF complex is composed of a number of TBP-associated factors (TAFS), such as TAF5, TAF5L, TAF6, TAF6L, TAF9, TAF10 and TAF12, PCAF, and also PCAF-associated factors (PAFs), such as TADA2L/ADA2, TADA3L/ADA3 and SPT3. Interacts directly with TADA2L and PCAF and also with the high-risk HPV oncoprotein E6. Component of the STAGA transcription coactivator-HAT complex, at least composed of SUPT3H, GCN5L2, TAF5L, TAF6L, SUPT7L, TADA3L, TAD1L, TAF10, TAF12, TRRAP and TAF9. Component of the TFTC-HAT complex. Component of the ADA2A-containing complex (ATAC), composed of KAT14, KAT2A, TADA2L, TADA3L, ZZ3, MBIP, WDR5, YEATS2, CCDC101 and DR1.

Its subcellular location is the nucleus. In terms of biological role, functions as a component of the PCAF complex. The PCAF complex is capable of efficiently acetylating histones in a nucleosomal context. The PCAF complex could be considered as the human version of the yeast SAGA complex. Also known as a coactivator for p53/TP53-dependent transcriptional activation. Component of the ATAC complex, a complex with histone acetyltransferase activity on histones H3 and H4. This Pongo abelii (Sumatran orangutan) protein is Transcriptional adapter 3 (TADA3).